We begin with the raw amino-acid sequence, 436 residues long: Trigger factor (436 aa).

One can recognise a PPIase FKBP-type domain in the interval 161 to 246; that stretch reads GDQLNIDFVG…VNSVSAPQLP (86 aa).

The protein belongs to the FKBP-type PPIase family. Tig subfamily.

Its subcellular location is the cytoplasm. It catalyses the reaction [protein]-peptidylproline (omega=180) = [protein]-peptidylproline (omega=0). Functionally, involved in protein export. Acts as a chaperone by maintaining the newly synthesized protein in an open conformation. Functions as a peptidyl-prolyl cis-trans isomerase. This is Trigger factor from Ectopseudomonas mendocina (strain ymp) (Pseudomonas mendocina).